A 185-amino-acid polypeptide reads, in one-letter code: Adenine phosphoribosyltransferase (185 aa).

This sequence belongs to the purine/pyrimidine phosphoribosyltransferase family. In terms of assembly, homodimer.

It is found in the cytoplasm. It carries out the reaction AMP + diphosphate = 5-phospho-alpha-D-ribose 1-diphosphate + adenine. Its pathway is purine metabolism; AMP biosynthesis via salvage pathway; AMP from adenine: step 1/1. Its function is as follows. Catalyzes a salvage reaction resulting in the formation of AMP, that is energically less costly than de novo synthesis. The chain is Adenine phosphoribosyltransferase from Corynebacterium glutamicum (strain ATCC 13032 / DSM 20300 / JCM 1318 / BCRC 11384 / CCUG 27702 / LMG 3730 / NBRC 12168 / NCIMB 10025 / NRRL B-2784 / 534).